Consider the following 284-residue polypeptide: Tropomyosin Per a 7.0103 (284 aa).

Positions 1-266 form a coiled coil; that stretch reads MDAIKKKMQA…EDELVHEKEK (266 aa).

The protein belongs to the tropomyosin family. In terms of assembly, homodimer.

Its function is as follows. Tropomyosin, in association with the troponin complex, plays a central role in the calcium dependent regulation of muscle contraction. In Periplaneta americana (American cockroach), this protein is Tropomyosin Per a 7.0103.